We begin with the raw amino-acid sequence, 279 residues long: Replication factor A protein 2 (279 aa).

The tract at residues 26-47 (GAGFNEYDQSSQPSVDRQQGAG) is disordered. Residues 32-46 (YDQSSQPSVDRQQGA) show a composition bias toward polar residues. Residues 80-140 (VTFVGVLRNI…GNIKIFSGKI (61 aa)) constitute a DNA-binding region (OB).

This sequence belongs to the replication factor A protein 2 family. In terms of assembly, heterotrimer of 68, 30, and 12 kDa chains. In terms of processing, phosphorylated in a cell cycle-dependent manner. Hypophosphorylated in G1, becomes phosphorylated at the G1/S boundary, it is maintained in this state through the M phase.

It is found in the nucleus. Binds to single-stranded sequences. The chain is Replication factor A protein 2 (ssb2) from Schizosaccharomyces pombe (strain 972 / ATCC 24843) (Fission yeast).